We begin with the raw amino-acid sequence, 30 residues long: Dermonecrotic toxin LlSicTox-alphaIII-1 (30 aa).

Residue histidine 12 is part of the active site.

This sequence belongs to the arthropod phospholipase D family. Class I subfamily. Mg(2+) is required as a cofactor. In terms of processing, contains 1 disulfide bond. As to expression, expressed by the venom gland.

It is found in the secreted. The enzyme catalyses an N-(acyl)-sphingosylphosphocholine = an N-(acyl)-sphingosyl-1,3-cyclic phosphate + choline. It catalyses the reaction an N-(acyl)-sphingosylphosphoethanolamine = an N-(acyl)-sphingosyl-1,3-cyclic phosphate + ethanolamine. It carries out the reaction a 1-acyl-sn-glycero-3-phosphocholine = a 1-acyl-sn-glycero-2,3-cyclic phosphate + choline. The catalysed reaction is a 1-acyl-sn-glycero-3-phosphoethanolamine = a 1-acyl-sn-glycero-2,3-cyclic phosphate + ethanolamine. Functionally, dermonecrotic toxins cleave the phosphodiester linkage between the phosphate and headgroup of certain phospholipids (sphingolipid and lysolipid substrates), forming an alcohol (often choline) and a cyclic phosphate. This toxin acts on sphingomyelin (SM). It may also act on ceramide phosphoethanolamine (CPE), lysophosphatidylcholine (LPC) and lysophosphatidylethanolamine (LPE), but not on lysophosphatidylserine (LPS), and lysophosphatidylglycerol (LPG). It acts by transphosphatidylation, releasing exclusively cyclic phosphate products as second products. In vivo, intradermal injection induces dermonecrosis. Induces hemolysis, increased vascular permeability, edema, inflammatory response, and platelet aggregation. The sequence is that of Dermonecrotic toxin LlSicTox-alphaIII-1 from Loxosceles laeta (South American recluse spider).